The sequence spans 189 residues: Cell division protein SepF (189 aa).

Residues 18–64 (EVTDHEDVAKERPVKVQKTEQTPSQQQRKPERPQETVPPRRQHIKSD) form a disordered region. Residues 22–35 (HEDVAKERPVKVQK) show a composition bias toward basic and acidic residues.

This sequence belongs to the SepF family. Homodimer. Interacts with FtsZ.

It localises to the cytoplasm. Cell division protein that is part of the divisome complex and is recruited early to the Z-ring. Probably stimulates Z-ring formation, perhaps through the cross-linking of FtsZ protofilaments. Its function overlaps with FtsA. The chain is Cell division protein SepF from Streptococcus thermophilus (strain ATCC BAA-250 / LMG 18311).